Here is a 297-residue protein sequence, read N- to C-terminus: 4-hydroxy-tetrahydrodipicolinate synthase (297 aa).

T55 is a pyruvate binding site. The active-site Proton donor/acceptor is Y144. Catalysis depends on K172, which acts as the Schiff-base intermediate with substrate. I213 is a binding site for pyruvate.

It belongs to the DapA family. In terms of assembly, homotetramer; dimer of dimers.

The protein resides in the cytoplasm. It catalyses the reaction L-aspartate 4-semialdehyde + pyruvate = (2S,4S)-4-hydroxy-2,3,4,5-tetrahydrodipicolinate + H2O + H(+). It participates in amino-acid biosynthesis; L-lysine biosynthesis via DAP pathway; (S)-tetrahydrodipicolinate from L-aspartate: step 3/4. Functionally, catalyzes the condensation of (S)-aspartate-beta-semialdehyde [(S)-ASA] and pyruvate to 4-hydroxy-tetrahydrodipicolinate (HTPA). In Lactococcus lactis subsp. cremoris (strain MG1363), this protein is 4-hydroxy-tetrahydrodipicolinate synthase.